Consider the following 336-residue polypeptide: MAELKLGYKASAEQFAPRELVELAVAAEAHGMDSATVSDHFQPWRHQGGHAPFSLSWMTAVGERTNRLLLGTSVLTPTFRYNPAVIAQAFATMGCLYPNRVFLGVGTGEALNEIATGYEGAWPEFKERFARLRESVGLMRQLWSGDRVDFDGDYYRLKGASIYDVPDGGVPVYIAAGGPAVAKYAGRAGDGFICTSGKGEELYTEKLMPAVREGAAAADRSVDGIDKMIEIKISYDPDPELALNNTRFWAPLSLTAEQKHSIDDPIEMEKAADALPIEQIAKRWIVASDPDEAVEKVGQYVTWGLNHLVFHAPGHDQRRFLELFQSDLAPRLRRLG.

Residue D39 participates in coenzyme F420-(gamma-Glu)n binding. The active-site Proton donor is the H40. Coenzyme F420-(gamma-Glu)n contacts are provided by residues T76 and 107-108 (TG). E109 acts as the Proton acceptor in catalysis. Coenzyme F420-(gamma-Glu)n is bound by residues N112, 177-178 (GG), and 180-181 (AV). Residues T195, K198, K259, and R283 each contribute to the substrate site.

This sequence belongs to the F420-dependent glucose-6-phosphate dehydrogenase family. Homodimer.

The catalysed reaction is oxidized coenzyme F420-(gamma-L-Glu)(n) + D-glucose 6-phosphate + H(+) = 6-phospho-D-glucono-1,5-lactone + reduced coenzyme F420-(gamma-L-Glu)(n). Functionally, catalyzes the coenzyme F420-dependent oxidation of glucose 6-phosphate (G6P) to 6-phosphogluconolactone. Appears to have a role in resistance to oxidative stress, via its consumption of G6P that serves as a source of reducing power to combat oxidative stress in mycobacteria. More precisely, is likely involved in a F420-dependent anti-oxidant mechanism that protects M.tuberculosis against oxidative stress and bactericidal agents. Is essential for the bioreductive activation of the bicyclic 4-nitroimidazole prodrug PA-824 (nitroimidazo-oxazine) developed for anti-tuberculosis therapy against both replicating and persistent bacteria. It does not interact directly with PA-824 but, rather, provides reduced F420 to the deazaflavin-dependent nitroreductase Ddn, which in turn activates PA-824. The sequence is that of F420-dependent glucose-6-phosphate dehydrogenase (fgd1) from Mycobacterium tuberculosis (strain CDC 1551 / Oshkosh).